We begin with the raw amino-acid sequence, 137 residues long: Large ribosomal subunit protein uL16 (137 aa).

The protein belongs to the universal ribosomal protein uL16 family. In terms of assembly, part of the 50S ribosomal subunit.

Binds 23S rRNA and is also seen to make contacts with the A and possibly P site tRNAs. In Wolbachia pipientis wMel, this protein is Large ribosomal subunit protein uL16.